Reading from the N-terminus, the 344-residue chain is Ureide permease 3 (344 aa).

At 1 to 10 (MYVIESKGGT) the chain is on the extracellular side. Residues 11–31 (ITCMLLALLFLGTWPAIMTLT) form a helical membrane-spanning segment. At 32–42 (ERRGRLPQHTY) the chain is on the cytoplasmic side. A helical membrane pass occupies residues 43–63 (LDYTLTNLLAAVIIAFTLGEI). The Extracellular segment spans residues 64–78 (SPSRPNFTTQLSQDN). Residues 79–99 (WPSVMFAMAGGIFLSLGTLAT) traverse the membrane as a helical segment. At 100–101 (QY) the chain is on the cytoplasmic side. Residues 102–122 (AWAFVGLSVTEVITASIAVVI) form a helical membrane-spanning segment. The Extracellular portion of the chain corresponds to 123–136 (GTTLNYFLDDRINR). A helical transmembrane segment spans residues 137 to 157 (AEVLFPGVACFLIAVCFGSAV). Topologically, residues 158–208 (HKSNAADNKSKLQGFKSLETTSSFQMETSSIKEGKAKVGTADFLIEVEKQR) are cytoplasmic. Position 209-216 (209-216 (AIKVFGKS)) interacts with ATP. Residues 209–229 (AIKVFGKSTIIGLAITFFAVP) traverse the membrane as a helical segment. Residues 230 to 235 (KLNVYT) are Extracellular-facing. A helical membrane pass occupies residues 236–256 (AFFYFSISSFGVGLILNIIFL). Residues 257-278 (YWPILGLPRSSFKAYLNDWNGR) lie on the Cytoplasmic side of the membrane. A helical transmembrane segment spans residues 279 to 299 (GWSFLAGFLCGFGNGLQFMGG). Over 300-344 (QAAGYAAAGAVQIENKHFGGYCCLENTKDHQEKHIHFLSVCYLCS) the chain is Extracellular.

It belongs to the plant ureide permease (TC 2.A.7.19) family.

Its subcellular location is the membrane. Proton-coupled transporter that transports a wide spectrum of oxo derivatives of heterocyclic nitrogen compounds. The chain is Ureide permease 3 from Arabidopsis thaliana (Mouse-ear cress).